Consider the following 130-residue polypeptide: Small ribosomal subunit protein uS8 (130 aa).

It belongs to the universal ribosomal protein uS8 family. In terms of assembly, part of the 30S ribosomal subunit. Contacts proteins S5 and S12.

One of the primary rRNA binding proteins, it binds directly to 16S rRNA central domain where it helps coordinate assembly of the platform of the 30S subunit. This is Small ribosomal subunit protein uS8 from Cronobacter sakazakii (strain ATCC BAA-894) (Enterobacter sakazakii).